A 1246-amino-acid polypeptide reads, in one-letter code: Myosin-1 (1246 aa).

The interval 1–41 is disordered; that stretch reads MGHSRRPVGGEKKSRGFGRSKAVADVGDGRQTGGKPQVKKA. The region spanning 51–730 is the Myosin motor domain; it reads IGVSDLTLLS…TLFALEAMRD (680 aa). 144–151 contributes to the ATP binding site; sequence GESGAGKT. Ser-372 is modified (phosphoserine). Residues 419–501 form an actin-binding region; it reads SIGILDIYGF…PGVFAALNDA (83 aa). IQ domains lie at 734-754 and 755-780; these read HNMA…RIEC and AIRI…QGHK. The TH1 domain maps to 788–976; sequence RRRMSLLGSR…TIHTSAGEPP (189 aa). Positions 956–970 are enriched in polar residues; sequence GSSNVDTYKSSTIHT. Disordered stretches follow at residues 956-1080 and 1127-1246; these read GSSN…PKKP and WTPQ…DDEW. Composition is skewed to pro residues over residues 1033–1045 and 1065–1078; these read APQP…PVPQ and APPP…PAPK. Residues 1077–1138 enclose the SH3 domain; it reads PKKPMAKVLY…PQAYLEEQKA (62 aa). Composition is skewed to low complexity over residues 1151–1166 and 1214–1228; these read TPAT…AKAK and NSAS…LAEA. Residues 1229–1240 are compositionally biased toward basic and acidic residues; that stretch reads LRQRQEAMHGKQ.

It belongs to the TRAFAC class myosin-kinesin ATPase superfamily. Myosin family. Phosphorylation of the TEDS site (Ser-372) is required for the polarization of the actin cytoskeleton. Phosphorylation probably activates the myosin-I ATPase activity.

It localises to the cytoplasm. It is found in the cytoskeleton. The protein resides in the actin patch. Its function is as follows. Type-I myosin implicated in the organization of the actin cytoskeleton. Required for proper actin cytoskeleton polarization. At the cell cortex, assembles in patch-like structures together with proteins from the actin-polymerizing machinery and promotes actin assembly. Functions as actin nucleation-promoting factor (NPF) for the Arp2/3 complex. Plays an important role in polarized growth, spore germination, hyphal morphogenesis, and septal wall formation. The chain is Myosin-1 (myoA) from Aspergillus terreus (strain NIH 2624 / FGSC A1156).